The primary structure comprises 334 residues: Fructose-1,6-bisphosphatase class 1 (334 aa).

Positions 90, 113, 115, and 116 each coordinate Mg(2+). Substrate is bound by residues 116 to 119, Asn209, Tyr242, and Lys272; that span reads DGSS. Glu278 serves as a coordination point for Mg(2+).

This sequence belongs to the FBPase class 1 family. As to quaternary structure, homotetramer. Mg(2+) is required as a cofactor.

It localises to the cytoplasm. The enzyme catalyses beta-D-fructose 1,6-bisphosphate + H2O = beta-D-fructose 6-phosphate + phosphate. It participates in carbohydrate biosynthesis; gluconeogenesis. This chain is Fructose-1,6-bisphosphatase class 1, found in Haemophilus ducreyi (strain 35000HP / ATCC 700724).